The sequence spans 444 residues: Methylenetetrahydrofolate--tRNA-(uracil-5-)-methyltransferase TrmFO (444 aa).

9–14 contacts FAD; sequence GAGMAG.

Belongs to the MnmG family. TrmFO subfamily. The cofactor is FAD.

It localises to the cytoplasm. It catalyses the reaction uridine(54) in tRNA + (6R)-5,10-methylene-5,6,7,8-tetrahydrofolate + NADH + H(+) = 5-methyluridine(54) in tRNA + (6S)-5,6,7,8-tetrahydrofolate + NAD(+). The catalysed reaction is uridine(54) in tRNA + (6R)-5,10-methylene-5,6,7,8-tetrahydrofolate + NADPH + H(+) = 5-methyluridine(54) in tRNA + (6S)-5,6,7,8-tetrahydrofolate + NADP(+). In terms of biological role, catalyzes the folate-dependent formation of 5-methyl-uridine at position 54 (M-5-U54) in all tRNAs. The polypeptide is Methylenetetrahydrofolate--tRNA-(uracil-5-)-methyltransferase TrmFO (Cereibacter sphaeroides (strain ATCC 17023 / DSM 158 / JCM 6121 / CCUG 31486 / LMG 2827 / NBRC 12203 / NCIMB 8253 / ATH 2.4.1.) (Rhodobacter sphaeroides)).